A 139-amino-acid polypeptide reads, in one-letter code: Protein cornichon homolog 4 (139 aa).

The next 3 membrane-spanning stretches (helical) occupy residues 5–25 (VFVF…YFII), 57–77 (IVTV…NLPV), and 118–138 (LGFH…ALIN).

The protein belongs to the cornichon family. As to quaternary structure, interacts with Sec23/24 complex components SEC24B and SEC24D. Interacts with CCR5. Interacts with ADRB2 in the early secretory pathway.

It is found in the membrane. The protein localises to the endoplasmic reticulum. The protein resides in the endoplasmic reticulum-Golgi intermediate compartment. Involved in G protein-coupled receptors (GPCRs) trafficking from the endoplasmic reticulum to the cell surface; it promotes the exit of GPCRs from the early secretory pathway, likely through interaction with the COPII machinery. In Homo sapiens (Human), this protein is Protein cornichon homolog 4 (CNIH4).